Consider the following 300-residue polypeptide: Acetylglutamate kinase (300 aa).

Residues 69–70 (GG), Arg91, and Asn197 contribute to the substrate site.

Belongs to the acetylglutamate kinase family. ArgB subfamily.

The protein resides in the cytoplasm. It carries out the reaction N-acetyl-L-glutamate + ATP = N-acetyl-L-glutamyl 5-phosphate + ADP. It functions in the pathway amino-acid biosynthesis; L-arginine biosynthesis; N(2)-acetyl-L-ornithine from L-glutamate: step 2/4. In terms of biological role, catalyzes the ATP-dependent phosphorylation of N-acetyl-L-glutamate. This chain is Acetylglutamate kinase, found in Kineococcus radiotolerans (strain ATCC BAA-149 / DSM 14245 / SRS30216).